The chain runs to 414 residues: 2,3-bisphosphoglycerate-independent phosphoglycerate mutase (414 aa).

This sequence belongs to the BPG-independent phosphoglycerate mutase family. A-PGAM subfamily.

The catalysed reaction is (2R)-2-phosphoglycerate = (2R)-3-phosphoglycerate. Its pathway is carbohydrate degradation; glycolysis; pyruvate from D-glyceraldehyde 3-phosphate: step 3/5. Its function is as follows. Catalyzes the interconversion of 2-phosphoglycerate and 3-phosphoglycerate. The sequence is that of 2,3-bisphosphoglycerate-independent phosphoglycerate mutase from Saccharolobus islandicus (strain M.14.25 / Kamchatka #1) (Sulfolobus islandicus).